The following is a 417-amino-acid chain: UDP-N-acetylglucosamine 1-carboxyvinyltransferase (417 aa).

22 to 23 lines the phosphoenolpyruvate pocket; it reads KN. Residue R93 participates in UDP-N-acetyl-alpha-D-glucosamine binding. C117 acts as the Proton donor in catalysis. C117 is modified (2-(S-cysteinyl)pyruvic acid O-phosphothioketal). UDP-N-acetyl-alpha-D-glucosamine contacts are provided by residues 122 to 126, D305, and I327; that span reads RPVDQ.

Belongs to the EPSP synthase family. MurA subfamily.

Its subcellular location is the cytoplasm. The enzyme catalyses phosphoenolpyruvate + UDP-N-acetyl-alpha-D-glucosamine = UDP-N-acetyl-3-O-(1-carboxyvinyl)-alpha-D-glucosamine + phosphate. The protein operates within cell wall biogenesis; peptidoglycan biosynthesis. Functionally, cell wall formation. Adds enolpyruvyl to UDP-N-acetylglucosamine. This Nitrosomonas europaea (strain ATCC 19718 / CIP 103999 / KCTC 2705 / NBRC 14298) protein is UDP-N-acetylglucosamine 1-carboxyvinyltransferase.